Here is an 89-residue protein sequence, read N- to C-terminus: uncharacterized protein (89 aa).

It to M.jannaschii MJ1436.

This is an uncharacterized protein from Methanothermobacter thermautotrophicus (strain ATCC 29096 / DSM 1053 / JCM 10044 / NBRC 100330 / Delta H) (Methanobacterium thermoautotrophicum).